The following is an 83-amino-acid chain: Mu-theraphotoxin-Hhn2b 3 (83 aa).

Residues 1 to 21 form the signal peptide; sequence MKASMFLALAGLVLLFVVCYA. A propeptide spanning residues 22–48 is cleaved from the precursor; that stretch reads SESEEKEFPRELISKIFAVDDFKGEVR. Cystine bridges form between Cys-50–Cys-65, Cys-57–Cys-70, and Cys-64–Cys-77. Leu-81 carries the leucine amide modification.

Belongs to the neurotoxin 10 (Hwtx-1) family. 14 (Hntx-1) subfamily. In terms of assembly, monomer. Expressed by the venom gland.

The protein resides in the secreted. Weakly blocks the rat SCN2A/SCN1B (Nav1.2/beta-1) sodium channel (IC(50)=68 uM) and the insect sodium channel para/tipE (IC(50)=4.3 uM), without altering the activation or inactivation kinetics (depressant toxin). This Cyriopagopus hainanus (Chinese bird spider) protein is Mu-theraphotoxin-Hhn2b 3.